We begin with the raw amino-acid sequence, 672 residues long: Glycine--tRNA ligase beta subunit (672 aa).

It belongs to the class-II aminoacyl-tRNA synthetase family. As to quaternary structure, tetramer of two alpha and two beta subunits.

The protein localises to the cytoplasm. The catalysed reaction is tRNA(Gly) + glycine + ATP = glycyl-tRNA(Gly) + AMP + diphosphate. The chain is Glycine--tRNA ligase beta subunit from Thermotoga petrophila (strain ATCC BAA-488 / DSM 13995 / JCM 10881 / RKU-1).